Reading from the N-terminus, the 140-residue chain is Large ribosomal subunit protein uL11 (140 aa).

Belongs to the universal ribosomal protein uL11 family. As to quaternary structure, part of the ribosomal stalk of the 50S ribosomal subunit. Interacts with L10 and the large rRNA to form the base of the stalk. L10 forms an elongated spine to which L12 dimers bind in a sequential fashion forming a multimeric L10(L12)X complex. Post-translationally, one or more lysine residues are methylated.

Forms part of the ribosomal stalk which helps the ribosome interact with GTP-bound translation factors. This chain is Large ribosomal subunit protein uL11, found in Geobacter metallireducens (strain ATCC 53774 / DSM 7210 / GS-15).